We begin with the raw amino-acid sequence, 1162 residues long: Sialidase (1162 aa).

BNR repeat units follow at residues 23–34 (KYSVDDGETWET), 163–174 (FYSEDDGKTWKF), and 209–220 (YESSDMEKPWVE). N-linked (GlcNAc...) asparagine glycosylation is found at Asn-342 and Asn-394. The segment at 587–1123 (HMDSSSDSSA…STPSTPAGSS (537 aa)) is disordered. The segment covering 589–615 (DSSSDSSAHSTPSTPADSSAHSTPSTP) has biased composition (low complexity). Positions 589-1120 (DSSSDSSAHS…SAHSTPSTPA (532 aa)) are 44 X 12 AA tandem repeats, LTR domain. Composition is skewed to polar residues over residues 616 to 689 (VDSS…TPVD) and 699 to 1123 (PADS…AGSS). A glycan (N-linked (GlcNAc...) asparagine) is linked at Asn-1125.

Belongs to the glycosyl hydrolase 33 family.

It localises to the cell membrane. It catalyses the reaction Hydrolysis of alpha-(2-&gt;3)-, alpha-(2-&gt;6)-, alpha-(2-&gt;8)- glycosidic linkages of terminal sialic acid residues in oligosaccharides, glycoproteins, glycolipids, colominic acid and synthetic substrates.. Its function is as follows. Developmentally regulated neuraminidase implicated in parasite invasion of cells. This is Sialidase (TCNA) from Trypanosoma cruzi.